The sequence spans 291 residues: Phosphate import ATP-binding protein PstB (291 aa).

Residues 1–17 (MANTNVKEKELAKHTDQ) are compositionally biased toward basic and acidic residues. The disordered stretch occupies residues 1–40 (MANTNVKEKELAKHTDQSQESISTVVSSNEVKHNKESDSN). Positions 18 to 29 (SQESISTVVSSN) are enriched in polar residues. Residues 30–40 (EVKHNKESDSN) are compositionally biased toward basic and acidic residues. Residues 45 to 286 (YSTQNLDLWY…PSDKQTEDYI (242 aa)) form the ABC transporter domain. Position 77–84 (77–84 (GPSGCGKS)) interacts with ATP.

This sequence belongs to the ABC transporter superfamily. Phosphate importer (TC 3.A.1.7) family. As to quaternary structure, the complex is composed of two ATP-binding proteins (PstB), two transmembrane proteins (PstC and PstA) and a solute-binding protein (PstS).

The protein localises to the cell membrane. The enzyme catalyses phosphate(out) + ATP + H2O = ADP + 2 phosphate(in) + H(+). In terms of biological role, part of the ABC transporter complex PstSACB involved in phosphate import. Responsible for energy coupling to the transport system. In Staphylococcus haemolyticus (strain JCSC1435), this protein is Phosphate import ATP-binding protein PstB.